The sequence spans 440 residues: Protein disulfide-isomerase A6 (440 aa).

A signal peptide spans 1 to 19 (MARLVLGLVSCTFFLAVSG). 2 consecutive Thioredoxin domains span residues 20 to 133 (LYSS…ALRQ) and 151 to 287 (QGRG…EDIA). A disulfide bond links Cys55 and Cys58. A phosphoserine mark is found at Ser129, Ser156, and Ser158. A disordered region spans residues 139 to 161 (LGGRSGGYSSGKQGRGDSSSKKD). Basic and acidic residues predominate over residues 152–161 (GRGDSSSKKD). Residues Cys190 and Cys193 are joined by a disulfide bond. A disordered region spans residues 399–440 (GGGSFPTITPREPWDGKDGELPVEDDIDLSDVELDDLEKDEL). The span at 419–440 (LPVEDDIDLSDVELDDLEKDEL) shows a compositional bias: acidic residues. A Phosphoserine modification is found at Ser428. The Prevents secretion from ER signature appears at 437-440 (KDEL).

This sequence belongs to the protein disulfide isomerase family. Part of a large chaperone multiprotein complex comprising DNAJB11, HSP90B1, HSPA5, HYOU, PDIA2, PDIA4, PDIA6, PPIB, SDF2L1, UGGT1 and very small amounts of ERP29, but not, or at very low levels, CALR nor CANX. Interacts with MICA on the surface of tumor cells, leading to MICA disulfide bond reduction which is required for its release from tumor cells. Interacts with ITGB3 following platelet stimulation. Interacts with ERN1; the interaction is direct. Interacts with EIF2AK3.

The protein localises to the endoplasmic reticulum lumen. Its subcellular location is the cell membrane. It localises to the melanosome. The catalysed reaction is Catalyzes the rearrangement of -S-S- bonds in proteins.. In terms of biological role, may function as a chaperone that inhibits aggregation of misfolded proteins. Negatively regulates the unfolded protein response (UPR) through binding to UPR sensors such as ERN1, which in turn inactivates ERN1 signaling. May also regulate the UPR via the EIF2AK3 UPR sensor. Plays a role in platelet aggregation and activation by agonists such as convulxin, collagen and thrombin. This Mus musculus (Mouse) protein is Protein disulfide-isomerase A6 (Pdia6).